Here is a 1518-residue protein sequence, read N- to C-terminus: Probable serine/threonine-protein kinase HSL1 (1518 aa).

Disordered regions lie at residues 1-43 (MTGH…GHLE) and 55-83 (RLSQ…PWKL). Polar residues predominate over residues 55 to 68 (RLSQPDSTVSVATK). The 289-residue stretch at 81–369 (WKLGKTLGKG…TQEILKHPLI (289 aa)) folds into the Protein kinase domain. Residues 87 to 95 (LGKGSSGRV) and Lys-110 contribute to the ATP site. The active-site Proton acceptor is the Asp-239. The disordered stretch occupies residues 467 to 502 (LSSSSENKKSATESSVNEPRIEYASKTANNTGLRSE). A compositionally biased stretch (polar residues) spans 492-501 (KTANNTGLRS). Ser-511 carries the post-translational modification Phosphoserine. The span at 599-611 (SNSRLSLSASTSR) shows a compositional bias: low complexity. Residues 599–651 (SNSRLSLSASTSRETVHDNEMPLPQLPKSPSRYSLSRRAIHASPSTKSIHKSL) form a disordered region. A phosphoserine mark is found at Ser-629 and Ser-685. The segment at 741–783 (EEEDNEKERDTQRQRQNDTKSSADTFTISGVSTNKENEGPEYP) is disordered. Positions 746–758 (EKERDTQRQRQND) are enriched in basic and acidic residues. Residues 759 to 774 (TKSSADTFTISGVSTN) are compositionally biased toward polar residues. Ser-837 and Ser-866 each carry phosphoserine. The span at 856–876 (EQLQKKNDRPSPLKPIQHQEL) shows a compositional bias: basic and acidic residues. 4 disordered regions span residues 856–898 (EQLQ…RRNI), 1005–1030 (DDKH…KQSA), 1150–1170 (APSD…RASV), and 1220–1243 (SPEN…RDSN). Ser-1220 carries the post-translational modification Phosphoserine. Polar residues predominate over residues 1222-1243 (ENPSNTHMQKRFSSTRGSRDSN). Phosphoserine is present on Ser-1250. Residues 1259-1291 (EEDQDGHTSQADILESSMSYSKRRPSEESVNPK) are disordered. Residues 1265–1278 (HTSQADILESSMSY) show a composition bias toward polar residues. Ser-1284, Ser-1287, and Ser-1325 each carry phosphoserine.

This sequence belongs to the protein kinase superfamily. CAMK Ser/Thr protein kinase family. NIM1 subfamily.

The protein resides in the bud neck. It catalyses the reaction L-seryl-[protein] + ATP = O-phospho-L-seryl-[protein] + ADP + H(+). The catalysed reaction is L-threonyl-[protein] + ATP = O-phospho-L-threonyl-[protein] + ADP + H(+). This Saccharomyces cerevisiae (strain ATCC 204508 / S288c) (Baker's yeast) protein is Probable serine/threonine-protein kinase HSL1 (HSL1).